We begin with the raw amino-acid sequence, 347 residues long: DNA primase small subunit PriS (347 aa).

Active-site residues include Asp95 and Asp97. The Zn(2+) site is built by Cys106, His108, Cys114, and Cys117. The Zinc knuckle motif signature appears at 106 to 117 (CNHEPGTVCPIC). Residue Asp280 is part of the active site.

This sequence belongs to the eukaryotic-type primase small subunit family. As to quaternary structure, heterodimer of a small subunit (PriS) and a large subunit (PriL). Both participate in formation of the active center, but the ATP-binding site is exclusively located on the small subunit. It depends on Mg(2+) as a cofactor. The cofactor is Mn(2+).

In terms of biological role, catalytic subunit of DNA primase, an RNA polymerase that catalyzes the synthesis of short RNA molecules used as primers for DNA polymerase during DNA replication. The small subunit contains the primase catalytic core and has DNA synthesis activity on its own. Binding to the large subunit stabilizes and modulates the activity, increasing the rate of DNA synthesis while decreasing the length of the DNA fragments, and conferring RNA synthesis capability. The DNA polymerase activity may enable DNA primase to also catalyze primer extension after primer synthesis. May also play a role in DNA repair. In Pyrococcus furiosus (strain ATCC 43587 / DSM 3638 / JCM 8422 / Vc1), this protein is DNA primase small subunit PriS.